Reading from the N-terminus, the 158-residue chain is Dihydroneopterin triphosphate diphosphatase (158 aa).

3 residues coordinate substrate: Lys14, Arg36, and Thr47. Positions 14-153 (KNNQSVLVVI…NNAEAIKKYL (140 aa)) constitute a Nudix hydrolase domain. The short motif at 48-69 (GTIESDETPKKTAIRELWEEVR) is the Nudix box element. Mg(2+)-binding residues include Glu63 and Glu67. 88–91 (FEIF) is a substrate binding site. Mg(2+) is bound at residue Glu124. Position 142 (Ser142) interacts with substrate.

This sequence belongs to the Nudix hydrolase family. Mg(2+) serves as cofactor.

The catalysed reaction is 7,8-dihydroneopterin 3'-triphosphate + H2O = 7,8-dihydroneopterin 3'-phosphate + diphosphate + H(+). Its function is as follows. Catalyzes the hydrolysis of dihydroneopterin triphosphate to dihydroneopterin monophosphate and pyrophosphate. Required for efficient folate biosynthesis. Can also hydrolyze nucleoside triphosphates with a preference for dATP. This Haemophilus influenzae (strain ATCC 51907 / DSM 11121 / KW20 / Rd) protein is Dihydroneopterin triphosphate diphosphatase (nudB).